The chain runs to 454 residues: Histidine--tRNA ligase (454 aa).

It belongs to the class-II aminoacyl-tRNA synthetase family. As to quaternary structure, homodimer.

The protein localises to the cytoplasm. The catalysed reaction is tRNA(His) + L-histidine + ATP = L-histidyl-tRNA(His) + AMP + diphosphate + H(+). The polypeptide is Histidine--tRNA ligase (Bacteroides fragilis (strain ATCC 25285 / DSM 2151 / CCUG 4856 / JCM 11019 / LMG 10263 / NCTC 9343 / Onslow / VPI 2553 / EN-2)).